Reading from the N-terminus, the 187-residue chain is 1,6-anhydro-N-acetylmuramyl-L-alanine amidase AmpD (187 aa).

In terms of domain architecture, N-acetylmuramoyl-L-alanine amidase spans 29–167 (SLLVVHNISL…TPDRKTDPGP (139 aa)). Histidine 34 lines the Zn(2+) pocket. Catalysis depends on glutamate 116, which acts as the Proton acceptor. Residues histidine 154 and aspartate 164 each coordinate Zn(2+).

The protein belongs to the N-acetylmuramoyl-L-alanine amidase 2 family. Zn(2+) serves as cofactor.

It is found in the cytoplasm. The enzyme catalyses Hydrolyzes the link between N-acetylmuramoyl residues and L-amino acid residues in certain cell-wall glycopeptides.. Its function is as follows. Involved in cell wall peptidoglycan recycling. Specifically cleaves the amide bond between the lactyl group of N-acetylmuramic acid and the alpha-amino group of the L-alanine in degradation products containing an anhydro N-acetylmuramyl moiety. The sequence is that of 1,6-anhydro-N-acetylmuramyl-L-alanine amidase AmpD (ampD) from Salmonella typhimurium (strain LT2 / SGSC1412 / ATCC 700720).